The chain runs to 148 residues: Large ribosomal subunit protein uL15 (148 aa).

Residues 1–51 (MNLSSLKPAEGAVKSRKRIGRGPGSGLGGTSTRGHKGAKSRSGYSKKIGFE) are disordered. Residues 21–31 (RGPGSGLGGTS) are compositionally biased toward gly residues.

This sequence belongs to the universal ribosomal protein uL15 family. In terms of assembly, part of the 50S ribosomal subunit.

In terms of biological role, binds to the 23S rRNA. This is Large ribosomal subunit protein uL15 from Porphyromonas gingivalis (strain ATCC BAA-308 / W83).